Consider the following 1453-residue polypeptide: Collagen alpha-1(I) chain (1453 aa).

Residues 1–22 form the signal peptide; it reads MFSFVDSRLLLLIAATVLLTRG. Residues 23–151 constitute a propeptide, N-terminal propeptide; it reads EGEEDIQTGS…PPGLGGNFAP (129 aa). The VWFC domain occupies 31–89; the sequence is GSCVQDGLTYNDKDVWKPEPCQICVCDSGNILCDEVICEDTSDCPNAEIPFGECCPICP. A disordered region spans residues 98–1203; it reads PESAGVEGPK…PQEKAHDGGR (1106 aa). Positions 106 to 116 are enriched in basic and acidic residues; that stretch reads PKGDTGPRGDR. The segment covering 131 to 143 has biased composition (pro residues); the sequence is PGLPGPPGPPGPP. Gln152 carries the pyrrolidone carboxylic acid modification. The residue at position 160 (Lys160) is an Allysine. Positions 162 to 176 are enriched in low complexity; the sequence is AGVAVPGPMGPAGPR. Residues Pro179, Pro182, Pro185, Pro194, Pro197, Pro200, Pro215, Pro230, Pro236, Pro245, and Pro251 each carry the 4-hydroxyproline modification. The span at 187–206 shows a compositional bias: low complexity; it reads PQGFQGPPGEPGEPGASGPM. A 5-hydroxylysine; alternate modification is found at Lys254. A glycan (O-linked (Gal...) hydroxylysine; partial) is linked at Lys254. Over residues 265–284 the composition is skewed to low complexity; that stretch reads AKGQPGPAGPKGEPGSPGEN. A 4-hydroxyproline mark is found at Pro269, Pro278, Pro281, Pro287, Pro296, Pro302, Pro317, Pro323, Pro332, and Pro335. Over residues 307–319 the composition is skewed to low complexity; that stretch reads PAGARGNDGAPGA. A compositionally biased stretch (pro residues) spans 320 to 334; it reads AGPPGPTGPAGPPGF. Positions 350 to 361 are enriched in low complexity; the sequence is RGSEGPQGSRGE. A 4-hydroxyproline mark is found at Pro362, Pro365, Pro377, Pro383, Pro392, Pro398, Pro401, and Pro416. Over residues 368–418 the composition is skewed to low complexity; the sequence is AGAAGPAGNPGADGQPGAKGATGAPGIAGAPGFPGARGPSGPQGPSGAPGP. At Lys419 the chain carries 5-hydroxylysine. Pro425, Pro428, Pro440, Pro449, Pro464, Pro470, Pro479, and Pro485 each carry 4-hydroxyproline. A compositionally biased stretch (low complexity) spans 463–482; the sequence is EPGPAGLPGPAGERGAPGSR. The residue at position 494 (Lys494) is a 5-hydroxylysine. 4-hydroxyproline is present on residues Pro497, Pro503, Pro512, Pro518, Pro524, Pro533, Pro536, Pro545, Pro554, Pro560, Pro572, Pro581, Pro584, Pro590, Pro593, Pro611, Pro629, Pro635, Pro641, Pro647, Pro653, Pro659, Pro671, Pro680, Pro692, Pro704, Pro707, Pro713, Pro719, Pro728, and Pro737. The span at 527–581 shows a compositional bias: low complexity; that stretch reads KGLTGSPGSPGPDGKTGPPGPAGQDGRPGPAGPPGARGQAGVMGFPGPKGAAGEP. The span at 623 to 664 shows a compositional bias: low complexity; that stretch reads QGPAGAPGFQGLPGPAGPPGEAGKPGEQGVPGNAGAPGPAGA. The segment covering 685–722 has biased composition (low complexity); sequence PRGANGAPGNDGAKGDAGAPGAPGNEGPPGLEGMPGER. Position 740 is a 5-hydroxylysine (Lys740). 4-hydroxyproline is present on residues Pro746, Pro761, Pro767, Pro776, Pro788, Pro794, Pro797, Pro806, Pro812, Pro830, Pro839, and Pro848. The segment covering 800–827 has biased composition (low complexity); the sequence is AGFAGPPGADGQPGAKGETGDAGAKGDA. The segment covering 835 to 883 has biased composition (low complexity); that stretch reads PTGAPGPAGZVGAPGPKGARGSAGPPGATGFPGAAGRVGPPGPSGNIGL. The residue at position 851 (Lys851) is a 5-hydroxylysine. Residues Pro860 and Pro866 each carry the 4-hydroxyproline modification. Pro874 carries the 3-hydroxyproline modification. Pro875, Pro884, Pro887, Pro908, Pro911, Pro917, Pro920, Pro926, Pro935, Pro953, Pro962, Pro965, Pro971, Pro986, Pro992, Pro998, Pro1007, and Pro1013 each carry 4-hydroxyproline. Positions 890–908 are enriched in low complexity; sequence AGKZGSKGPRGETGPAGRP. Positions 910–920 are enriched in pro residues; that stretch reads EPGPAGPPGPP. A compositionally biased stretch (pro residues) spans 985–995; that stretch reads PPGPMGPPGLA. Low complexity predominate over residues 997 to 1021; the sequence is PPGEAGREGAPGAEGAPGRDGAAGP. Residue Lys1022 is modified to 5-hydroxylysine; partial. Residues 1031-1046 show a composition bias toward pro residues; sequence AGPPGAPGAPGAPGPV. A 4-hydroxyproline mark is found at Pro1034, Pro1037, Pro1040, and Pro1067. The span at 1070-1081 shows a compositional bias: low complexity; it reads AGARGPAGPQGP. Basic and acidic residues predominate over residues 1082 to 1096; the sequence is RGDKGETGEQGDRGM. Lys1085 is subject to 5-hydroxylysine; partial. Lys1097 is subject to 5-hydroxylysine; alternate. A glycan (O-linked (Gal...) hydroxylysine; partial) is linked at Lys1097. A 4-hydroxyproline mark is found at Pro1109, Pro1112, Pro1115, Pro1133, and Pro1148. A compositionally biased stretch (low complexity) spans 1115–1139; it reads PGEQGPSGASGPAGPRGPPGSAGAA. The residue at position 1153 (Pro1153) is a 3-hydroxyproline. Pro1154 is modified (4-hydroxyproline). Over residues 1166–1181 the composition is skewed to pro residues; the sequence is VGPPGPPGPPGPPGPP. Residue Pro1168 is modified to 3-hydroxyproline. At Pro1169 the chain carries 4-hydroxyproline. Pro1171 bears the 3-hydroxyproline mark. Pro1172 bears the 4-hydroxyproline mark. 3-hydroxyproline is present on Pro1174. 4-hydroxyproline occurs at positions 1175, 1178, and 1181. Lys1197 is modified (allysine). Residues 1208-1453 constitute a propeptide, C-terminal propeptide; the sequence is DDANVMRDRD…GIDIGPVCFL (246 aa). The Fibrillar collagen NC1 domain occupies 1218–1453; it reads LEVDTTLKSL…GIDIGPVCFL (236 aa). 3 disulfide bridges follow: Cys1248-Cys1280, Cys1288-Cys1451, and Cys1359-Cys1404. Ca(2+)-binding residues include Asp1266, Asn1268, Gln1269, Cys1271, and Asp1274. A glycan (N-linked (GlcNAc...) asparagine) is linked at Asn1354.

This sequence belongs to the fibrillar collagen family. In terms of assembly, trimers of one alpha 2(I) and two alpha 1(I) chains. Contains mostly 4-hydroxyproline. Proline residues at the third position of the tripeptide repeating unit (G-X-Y) are 4-hydroxylated in some or all of the chains. Post-translationally, contains 3-hydroxyproline. This modification occurs on the first proline residue in the sequence motif Gly-Pro-Hyp, where Hyp is 4-hydroxyproline. In terms of processing, lysine residues at the third position of the tripeptide repeating unit (G-X-Y) are 5-hydroxylated in some or all of the chains. O-glycosylated on hydroxylated lysine residues. The O-linked glycan consists of a Glc-Gal disaccharide. Forms the fibrils of tendon, ligaments and bones. In bones the fibrils are mineralized with calcium hydroxyapatite.

It is found in the secreted. The protein localises to the extracellular space. Its subcellular location is the extracellular matrix. Functionally, type I collagen is a member of group I collagen (fibrillar forming collagen). The sequence is that of Collagen alpha-1(I) chain (COL1A1) from Gallus gallus (Chicken).